Reading from the N-terminus, the 124-residue chain is UPF0344 protein BH2983 (124 aa).

Transmembrane regions (helical) follow at residues 15 to 35 (GSWA…KAGK), 40 to 60 (KILH…GAGM), 61 to 81 (LVYW…IVLI), and 102 to 122 (IYWI…YNVI).

Belongs to the UPF0344 family.

The protein localises to the cell membrane. This Halalkalibacterium halodurans (strain ATCC BAA-125 / DSM 18197 / FERM 7344 / JCM 9153 / C-125) (Bacillus halodurans) protein is UPF0344 protein BH2983.